The following is an 8903-amino-acid chain: Nonribosomal peptide synthetase vlms (8903 aa).

The Carrier 1 domain occupies 11-84; sequence GSCRTTLGKV…ELADSIDEQN (74 aa). The interval 13–81 is thiolation (T) domain 1; it reads CRTTLGKVAA…TLAELADSID (69 aa). Serine 45 is modified (O-(pantetheine 4'-phosphoryl)serine). Adenylation (A) domain regions lie at residues 59 to 736 and 989 to 1386; these read GIWV…SHLP and MAAQ…IKIR. Positions 572-953 are condensation (C) domain 1; that stretch reads VPHQLDTEKL…FLLDGVNMSI (382 aa). Residues 1524–1600 form the Carrier 2 domain; the sequence is SSMSTVEQEL…QLALAAESQA (77 aa). A thiolation (T) domain 2 region spans residues 1529–1597; sequence VEQELRQIWS…TIPQLALAAE (69 aa). Residue serine 1561 is modified to O-(pantetheine 4'-phosphoryl)serine. Residues 1613–2050 are epimerase (E) domain 1; sequence FPLSPIQKMY…TVKELAAVSA (438 aa). The condensation (C) domain 2 stretch occupies residues 2091 to 2523; the sequence is DILPCSPIQQ…LLSVSEENKL (433 aa). Residues 2546–2943 are adenylation (A) domain 2; the sequence is MSSHADATAI…GRQDSQVKIR (398 aa). A Carrier 3 domain is found at 3084–3160; it reads LFTTAIERQL…ELALQAKMVD (77 aa). The segment at 3089 to 3157 is thiolation (T) domain 3; sequence IERQLRQVWS…TIPELALQAK (69 aa). Serine 3121 carries the O-(pantetheine 4'-phosphoryl)serine modification. Residues 3174–3614 are epimerase (E) domain 2; the sequence is FALSPIQQMY…AIKSLVEELM (441 aa). Residues 3655–4093 form a condensation (C) domain 3 region; it reads EDILPCSPMQ…LMSTKDIQQL (439 aa). The tract at residues 4114–4512 is adenylation (A) domain 3; sequence ERLNTQPESM…GRIDTQIKIR (399 aa). The Carrier 4 domain occupies 4649 to 4725; the sequence is APRTTMEKKL…DLAEATELKC (77 aa). The tract at residues 4654–4722 is thiolation (T) domain 4; that stretch reads MEKKLRDLFA…ILADLAEATE (69 aa). The residue at position 4686 (serine 4686) is an O-(pantetheine 4'-phosphoryl)serine. Residues 4775–5191 are condensation (C) domain 4; that stretch reads EDVYPCSPLQ…AQLQMLSEED (417 aa). The tract at residues 5216 to 5614 is adenylation (A) domain 4; it reads ETMTSQPDAP…GRRDTQVKIR (399 aa). The region spanning 5753 to 5829 is the Carrier 5 domain; the sequence is APTTAMEKRL…DLAQELEQRH (77 aa). The interval 5758 to 5826 is thiolation (T) domain 5; sequence MEKRLQNLFC…RLGDLAQELE (69 aa). The residue at position 5790 (serine 5790) is an O-(pantetheine 4'-phosphoryl)serine. Position 5875 (glutamate 5875) is a region of interest, condensation (C) domain 5. Residues 6311-6702 are adenylation (A) domain 5; sequence EEQMSLRPSE…GRMDGQIKIR (392 aa). Residues 6836–6912 form the Carrier 6 domain; that stretch reads SSATNTERQL…ELAATLEVMD (77 aa). The tract at residues 6841–6909 is thiolation (T) domain 6; the sequence is TERQLRQIWS…TIPELAATLE (69 aa). Serine 6873 bears the O-(pantetheine 4'-phosphoryl)serine mark. Positions 6923–7349 are epimerase (E) domain 3; sequence GFFELSPIQR…YGRTIKTLVE (427 aa). The interval 7391–7823 is condensation (C) domain 6; that stretch reads EDILPCSPIQ…LVLTNDEAQI (433 aa). The tract at residues 7844-8240 is adenylation (A) domain 6; sequence EQMARKPEAQ…LDRIGTQVKI (397 aa). The 77-residue stretch at 8368 to 8444 folds into the Carrier 7 domain; it reads APISATEAVF…AMAACVSDVS (77 aa). Positions 8369-8441 are thiolation (T) domain 7; it reads PISATEAVFC…VLHAMAACVS (73 aa). Serine 8405 carries the post-translational modification O-(pantetheine 4'-phosphoryl)serine. A condensation (C) domain 7 region spans residues 8482–8897; sequence DVLPTTEFQT…MENPRSTVGH (416 aa).

The protein belongs to the NRP synthetase family.

The protein operates within secondary metabolite biosynthesis. Its function is as follows. Nonribosomal peptide synthetase; part of the gene cluster that mediates the biosynthesis of verlamelin, a lipopeptide that exhibits antifungal activity against plant pathogenic fungi. Verlamelin is a cyclic hexadepsipeptide and is bridged by ester bonding between a 5-hydroxytetradecanoic acid moiety and a carboxyl group on the terminal Val of amide-bonded tetradecanoyl-hexapeptide D-allo-Thr-D-Ala-L-Pro-L-Gln-D-Tyr-L-Val. VlmA and vlmB are altogether regarded as essential components in the biosynthesis of 5-hydroxytetradecanoic acid. VlmA catalyzes the hydroxylation at position C5 of tetradecanoic acid produced in primary metabolism, while the precise function of vlmB still remains to be solved. To be loaded onto the waiting NRPS, 5-hydroxytetradecanoic acid is activated in the form of acyladenylate by the AMP-dependent ligase vlmC. VlmS seems to accept the fatty-acyl intermediate onto the initial module to further elongate amino acid residues by the downstream modules. In addition, in the last module at its C-terminus, vlmS contains a surplus condensation (C) domain that may be involved in cyclization, the last step to form verlamelin. This is Nonribosomal peptide synthetase vlms from Lecanicillium sp.